The primary structure comprises 279 residues: Ribosomal RNA large subunit methyltransferase E (279 aa).

The segment covering 1–10 (MSDDDQKPED) has biased composition (basic and acidic residues). The segment at 1–66 (MSDDDQKPED…MKKGGDARAA (66 aa)) is disordered. Glycine 136, tryptophan 138, aspartate 154, aspartate 170, and aspartate 194 together coordinate S-adenosyl-L-methionine. The Proton acceptor role is filled by lysine 234.

It belongs to the class I-like SAM-binding methyltransferase superfamily. RNA methyltransferase RlmE family.

The protein resides in the cytoplasm. The enzyme catalyses uridine(2552) in 23S rRNA + S-adenosyl-L-methionine = 2'-O-methyluridine(2552) in 23S rRNA + S-adenosyl-L-homocysteine + H(+). In terms of biological role, specifically methylates the uridine in position 2552 of 23S rRNA at the 2'-O position of the ribose in the fully assembled 50S ribosomal subunit. This is Ribosomal RNA large subunit methyltransferase E from Maricaulis maris (strain MCS10) (Caulobacter maris).